Here is a 477-residue protein sequence, read N- to C-terminus: Aspartyl/glutamyl-tRNA(Asn/Gln) amidotransferase subunit B (477 aa).

This sequence belongs to the GatB/GatE family. GatB subfamily. As to quaternary structure, heterotrimer of A, B and C subunits.

It carries out the reaction L-glutamyl-tRNA(Gln) + L-glutamine + ATP + H2O = L-glutaminyl-tRNA(Gln) + L-glutamate + ADP + phosphate + H(+). It catalyses the reaction L-aspartyl-tRNA(Asn) + L-glutamine + ATP + H2O = L-asparaginyl-tRNA(Asn) + L-glutamate + ADP + phosphate + 2 H(+). Functionally, allows the formation of correctly charged Asn-tRNA(Asn) or Gln-tRNA(Gln) through the transamidation of misacylated Asp-tRNA(Asn) or Glu-tRNA(Gln) in organisms which lack either or both of asparaginyl-tRNA or glutaminyl-tRNA synthetases. The reaction takes place in the presence of glutamine and ATP through an activated phospho-Asp-tRNA(Asn) or phospho-Glu-tRNA(Gln). This chain is Aspartyl/glutamyl-tRNA(Asn/Gln) amidotransferase subunit B, found in Thioalkalivibrio sulfidiphilus (strain HL-EbGR7).